The sequence spans 1045 residues: MDIS1-interacting receptor like kinase 2 (1045 aa).

Residues Met1–Ala43 form the signal peptide. The Extracellular portion of the chain corresponds to Val44–Leu709. Residues Asn63, Asn77, Asn99, and Asn119 are each glycosylated (N-linked (GlcNAc...) asparagine). LRR repeat units lie at residues Leu92–Ser116, Leu117–Arg140, Phe141–Leu165, Ser166–Leu189, Lys191–Asn212, Leu213–Leu237, Pro238–Asn260, Lys262–Met285, Thr286–Ile309, Thr311–Met333, Glu334–Lys356, Leu357–Ser381, Glu383–Gly405, Gly406–Cys429, Ser431–Val452, Tyr453–Gln476, Ser477–Met501, Thr502–Ile525, Arg527–Leu549, Thr550–Leu573, Arg575–Leu597, Ser598–Ser620, Leu621–Asp644, and Leu646–Asn670. Residues Asn179 and Asn212 are each glycosylated (N-linked (GlcNAc...) asparagine). N-linked (GlcNAc...) asparagine glycans are attached at residues Asn249, Asn263, and Asn284. An N-linked (GlcNAc...) asparagine glycan is attached at Asn323. Residues Asn380, Asn393, and Asn410 are each glycosylated (N-linked (GlcNAc...) asparagine). Residues Asn487 and Asn500 are each glycosylated (N-linked (GlcNAc...) asparagine). A glycan (N-linked (GlcNAc...) asparagine) is linked at Asn580. Residue Asn633 is glycosylated (N-linked (GlcNAc...) asparagine). Asn687 carries N-linked (GlcNAc...) asparagine glycosylation. Residues Ile710–Ile730 traverse the membrane as a helical segment. Topologically, residues Phe731–Ser1045 are cytoplasmic. Thr772 carries the phosphothreonine modification. The 271-residue stretch at Phe775–Ser1045 folds into the Protein kinase domain. Residues Ile781–Val789 and Lys802 contribute to the ATP site. Tyr853 and Tyr892 each carry phosphotyrosine. Asp905 serves as the catalytic Proton acceptor. Ser938 is modified (phosphoserine). Residues Tyr946 and Tyr953 each carry the phosphotyrosine modification.

This sequence belongs to the protein kinase superfamily. Ser/Thr protein kinase family. Interacts with MDIS1 and LURE1.2. Binds to SCOOP12; this interaction triggers the formation of complex between MIK2 and the BAK1/SERK3 and SERK4 coreceptors. As to expression, expressed in pollen tubes. Highly expressed in shoots, roots and leaves.

The protein localises to the cell membrane. The enzyme catalyses L-seryl-[protein] + ATP = O-phospho-L-seryl-[protein] + ADP + H(+). The catalysed reaction is L-threonyl-[protein] + ATP = O-phospho-L-threonyl-[protein] + ADP + H(+). Functionally, acts as a receptor of SCOOP peptides from Brassicaceae plants regulating multiple processing including plant growth, development and stress responses. Perception of SCOOP peptides induces the association of MIK2 with the coreceptors BAK1/SERK3 and SERK4 and relays the signaling through the activation of receptor-like cytosolic kinases (RLCKs) BIK1 and PBL1. Also able to detect SCOOP-like proteins (SCOOPL) present in fungal Fusarium spp. and bacterial Comamonadaceae to elicit various immune responses, including growth inhibition, ROS production, calcium Ca(2+) influx, MAPK activation and MYB51 promoter activation in roots, thus being required for resistance to several root pathogens. Involved in the pollen tube perception of the female signal. Required to trigger defense responses toward generalist herbivores such as Spodoptera littoralis, probably via the activation of jasmonate and indole glucosinolate biosynthesis. The chain is MDIS1-interacting receptor like kinase 2 from Arabidopsis thaliana (Mouse-ear cress).